We begin with the raw amino-acid sequence, 364 residues long: Probable methyltransferase ICS2 (364 aa).

Residues Tyr-18, Cys-61, Asp-98, Leu-99, Ser-133, and Phe-134 each contribute to the S-adenosyl-L-homocysteine site. Mg(2+) is bound by residues Asn-172, Asp-258, Phe-260, and Asn-261.

The protein belongs to the methyltransferase superfamily. Type-7 methyltransferase family. The cofactor is Mg(2+).

In terms of biological role, no detectable N-methyltransferase activity. In Camellia irrawadiensis (Burmese tea), this protein is Probable methyltransferase ICS2.